An 891-amino-acid polypeptide reads, in one-letter code: Iron-regulated surface determinant protein H (891 aa).

A signal peptide spans 1-40; sequence MNKHHPKLRSFYSIRKSTLGVASVIVSTLFLITSQHQAQA. The interval 42-77 is disordered; that stretch reads ENTNTSDKISENQNNNATTTQQPKDTNQTQPATQPV. Residues 53–63 are compositionally biased toward low complexity; that stretch reads NQNNNATTTQQ. The span at 64–77 shows a compositional bias: polar residues; sequence PKDTNQTQPATQPV. The region spanning 105-232 is the NEAT 1 domain; the sequence is DIGPREQVNF…IYNDPSLVKS (128 aa). The tract at residues 239–324 is disordered; it reads VTNDQSSSDA…NQSDVNQQYP (86 aa). Residues 240–276 are compositionally biased toward low complexity; the sequence is TNDQSSSDASNQTNTNTSNQNTSTTNNANNQPQATTN. A compositionally biased stretch (polar residues) spans 277-323; that stretch reads MSQPAQPKSSANADQASSQPAHETNSNGNTNDKTNESSNQSDVNQQY. NEAT domains are found at residues 345–471 and 543–660; these read TADN…DYVD and QLTD…TKDD. Disordered stretches follow at residues 657-718, 752-777, and 835-864; these read TKDD…DADN, IAKD…KDSN, and TVKT…GETT. Composition is skewed to polar residues over residues 663–677 and 687–697; these read SQNN…QTGQ and AENSSTATNPK. A compositionally biased stretch (basic and acidic residues) spans 698-718; the sequence is DASDKADVIEPESDVVKDADN. Over residues 835-850 the composition is skewed to basic and acidic residues; it reads TVKTKEKAGTPSKENK. A compositionally biased stretch (polar residues) spans 851–864; that stretch reads LSQSKMLPKTGETT. The LPXTG sorting signal motif lies at 857–861; sequence LPKTG. A Pentaglycyl murein peptidoglycan amidated threonine modification is found at threonine 860. A propeptide spans 861-891 (removed by sortase); it reads GETTSSQSWWGLYALLGMLALFIPKFRKESK.

The protein belongs to the IsdH family.

Its subcellular location is the secreted. The protein localises to the cell wall. Functionally, binds human plasma haptoglobin-hemoglobin complexes, haptoglobin and hemoglobin. Binds haptoglobin-hemoglobin complexes with significantly higher affinity than haptoglobin alone. In Staphylococcus aureus (strain N315), this protein is Iron-regulated surface determinant protein H (isdH).